Reading from the N-terminus, the 1068-residue chain is Probable ATPase FE772_23070 (1068 aa).

Residue 217-224 coordinates ATP; it reads GGGGAGKT.

Involved in defense against bacteriophages. When this probable 4 gene operon (bGSDM-FE772_23060-FE772_23065-FE772_23070) is inserted into E.coli it provides nearly 100-fold protection against phages T5 and T6 and about 8-fold against phage T4. The operon without bGSDM no longer protects against phage. Probably a nucleotide hydrolase, possibly of ATP. The polypeptide is Probable ATPase FE772_23070 (Lysobacter enzymogenes).